A 337-amino-acid polypeptide reads, in one-letter code: Inositol 2-dehydrogenase (337 aa).

This sequence belongs to the Gfo/Idh/MocA family. Homotetramer.

It catalyses the reaction myo-inositol + NAD(+) = scyllo-inosose + NADH + H(+). In terms of biological role, involved in the oxidation of myo-inositol (MI) to 2-keto-myo-inositol (2KMI or 2-inosose). In Pseudarthrobacter chlorophenolicus (strain ATCC 700700 / DSM 12829 / CIP 107037 / JCM 12360 / KCTC 9906 / NCIMB 13794 / A6) (Arthrobacter chlorophenolicus), this protein is Inositol 2-dehydrogenase.